An 89-amino-acid polypeptide reads, in one-letter code: Translation initiation factor IF-1, chloroplastic (89 aa).

The 73-residue stretch at 1-73 folds into the S1-like domain; it reads MKEKEAKWVV…TKGRIIYRLP (73 aa).

The protein belongs to the IF-1 family. Component of the 30S ribosomal translation pre-initiation complex which assembles on the 30S ribosome in the order IF-2 and IF-3, IF-1 and N-formylmethionyl-tRNA(fMet); mRNA recruitment can occur at any time during PIC assembly.

Its subcellular location is the plastid. It localises to the chloroplast. Its function is as follows. One of the essential components for the initiation of protein synthesis. Stabilizes the binding of IF-2 and IF-3 on the 30S subunit to which N-formylmethionyl-tRNA(fMet) subsequently binds. Helps modulate mRNA selection, yielding the 30S pre-initiation complex (PIC). Upon addition of the 50S ribosomal subunit IF-1, IF-2 and IF-3 are released leaving the mature 70S translation initiation complex. This is Translation initiation factor IF-1, chloroplastic from Jasminum nudiflorum (Winter jasmine).